The primary structure comprises 298 residues: Bifunctional protein FolD (298 aa).

Residues 166–168, S191, and I232 contribute to the NADP(+) site; that span reads GRS.

This sequence belongs to the tetrahydrofolate dehydrogenase/cyclohydrolase family. In terms of assembly, homodimer.

It catalyses the reaction (6R)-5,10-methylene-5,6,7,8-tetrahydrofolate + NADP(+) = (6R)-5,10-methenyltetrahydrofolate + NADPH. It carries out the reaction (6R)-5,10-methenyltetrahydrofolate + H2O = (6R)-10-formyltetrahydrofolate + H(+). The protein operates within one-carbon metabolism; tetrahydrofolate interconversion. Functionally, catalyzes the oxidation of 5,10-methylenetetrahydrofolate to 5,10-methenyltetrahydrofolate and then the hydrolysis of 5,10-methenyltetrahydrofolate to 10-formyltetrahydrofolate. The protein is Bifunctional protein FolD of Parvibaculum lavamentivorans (strain DS-1 / DSM 13023 / NCIMB 13966).